The primary structure comprises 196 residues: Interleukin-23 subunit alpha (196 aa).

The signal sequence occupies residues 1 to 21 (MLDCRAIILLWLLPWATQGLA).

This sequence belongs to the IL-6 superfamily. Heterodimer with IL12B; disulfide-linked. The heterodimer is known as interleukin IL-23. Interacts with IL23R; this interaction enables recruitment of IL12RB1.

It localises to the secreted. In terms of biological role, associates with IL12B to form the pro-inflammatory cytokine IL-23 that plays different roles in innate and adaptive immunity. Released by antigen-presenting cells such as dendritic cells or macrophages, binds to a heterodimeric receptor complex composed of IL12RB1 and IL23R to activate JAK2 and TYK2 which then phosphorylate the receptor to form a docking site leading to the phosphorylation of STAT3 and STAT4. This process leads to activation of several pathways including p38 MAPK or NF-kappa-B and promotes the production of pro-inflammatory cytokines such as interleukin-17A/IL17A. In turn, participates in the early and effective intracellular bacterial clearance. Promotes the expansion and survival of T-helper 17 cells, a CD4-positive helper T-cell subset that produces IL-17, as well as other IL-17-producing cells. The chain is Interleukin-23 subunit alpha (Il23a) from Rattus norvegicus (Rat).